We begin with the raw amino-acid sequence, 85 residues long: Large ribosomal subunit protein bL27 (85 aa).

The interval 1 to 22 (MAHKKAAGSTRNGRDSESKRLG) is disordered.

The protein belongs to the bacterial ribosomal protein bL27 family.

This is Large ribosomal subunit protein bL27 from Pseudoalteromonas translucida (strain TAC 125).